A 530-amino-acid chain; its full sequence is Probable phosphoacetylglucosamine mutase (530 aa).

Catalysis depends on serine 62, which acts as the Phosphoserine intermediate. Residues serine 62, aspartate 278, aspartate 280, and aspartate 282 each contribute to the Mg(2+) site. Substrate-binding positions include 369–371, 481–485, and arginine 490; these read EPN and RPSGT.

Belongs to the phosphohexose mutase family. Mg(2+) is required as a cofactor.

It catalyses the reaction N-acetyl-alpha-D-glucosamine 1-phosphate = N-acetyl-D-glucosamine 6-phosphate. It participates in nucleotide-sugar biosynthesis; UDP-N-acetyl-alpha-D-glucosamine biosynthesis; N-acetyl-alpha-D-glucosamine 1-phosphate from alpha-D-glucosamine 6-phosphate (route I): step 2/2. Its function is as follows. Catalyzes the conversion of GlcNAc-6-P into GlcNAc-1-P during the synthesis of uridine diphosphate/UDP-GlcNAc, which is a biosynthetic precursor of chitin and also supplies the amino sugars for N-linked oligosaccharides of glycoproteins. This chain is Probable phosphoacetylglucosamine mutase, found in Encephalitozoon cuniculi (strain GB-M1) (Microsporidian parasite).